A 132-amino-acid polypeptide reads, in one-letter code: Ribosome-binding factor A (132 aa).

This sequence belongs to the RbfA family. In terms of assembly, monomer. Binds 30S ribosomal subunits, but not 50S ribosomal subunits or 70S ribosomes.

It localises to the cytoplasm. One of several proteins that assist in the late maturation steps of the functional core of the 30S ribosomal subunit. Associates with free 30S ribosomal subunits (but not with 30S subunits that are part of 70S ribosomes or polysomes). Required for efficient processing of 16S rRNA. May interact with the 5'-terminal helix region of 16S rRNA. The sequence is that of Ribosome-binding factor A from Burkholderia vietnamiensis (strain G4 / LMG 22486) (Burkholderia cepacia (strain R1808)).